Here is a 35-residue protein sequence, read N- to C-terminus: Kappa-theraphotoxin-Tb1c (35 aa).

3 disulfides stabilise this stretch: Cys-3-Cys-18, Cys-10-Cys-23, and Cys-17-Cys-30.

It belongs to the neurotoxin 10 (Hwtx-1) family. 59 (Tltx) subfamily. In terms of assembly, monomer. In terms of tissue distribution, expressed by the venom gland.

Its subcellular location is the secreted. Its function is as follows. Blocks Kv4.2/KCND2 voltage-gated potassium channels probably by shifting the voltage-dependence of channel activation to more depolarized potentials and by binding to the S3-S4 linker region of the voltage sensor domain. The chain is Kappa-theraphotoxin-Tb1c from Theraphosa blondi (Goliath birdeating spider).